A 472-amino-acid polypeptide reads, in one-letter code: MDTIDTPGEQGSQSFGNSLGARFDLPRKEQDPSQALAVASYQNKTDSQVVEEHLDELISLADSCGISVLETRSWILKTPSASTYINVGKLEEIEEILKEFPSIGTLIIDEEITPSQQRNLEKRLGLVVLDRTELILEIFSSRALTAEANIQVQLAQARYLLPRLKRLWGHLSRQKSGGGSGGFVKGEGEKQIELDRRMVRERIHKLSAQLKAVIKQRAERRKVKSRRGIPTFALIGYTNSGKSTLLNLLTAADTYVEDKLFATLDPKTRKCVLPGGRHVLLTDTVGFIRKLPHTLVAAFKSTLEAAFHEDVLLHVVDASHPLALEHVQTTYDLFQELKIEKPRIITVLNKVDRLPQGSIPMKLRLLSPLPVLISAKTGEGIQNLLSLMTEIIQEKSLHVTLNFPYTEYGKFTELCDAGVVASSRYQEDFLVVEAYLPKELQKKFRPFISYVFPEDCGDDEGRGPVLESSFGD.

A disordered region spans residues 1–21; that stretch reads MDTIDTPGEQGSQSFGNSLGA. Positions 230–396 constitute a Hflx-type G domain; that stretch reads PTFALIGYTN…LMTEIIQEKS (167 aa). Residues 236 to 243, 261 to 265, 283 to 286, 349 to 352, and 374 to 376 contribute to the GTP site; these read GYTNSGKS, FATLD, DTVG, NKVD, and SAK. Positions 243 and 263 each coordinate Mg(2+).

This sequence belongs to the TRAFAC class OBG-HflX-like GTPase superfamily. HflX GTPase family. As to quaternary structure, monomer. Associates with the 50S ribosomal subunit. Mg(2+) serves as cofactor.

It localises to the cytoplasm. Its function is as follows. GTPase that associates with the 50S ribosomal subunit and may have a role during protein synthesis or ribosome biogenesis. Specific for GTP. This is GTPase HflX from Chlamydia pneumoniae (Chlamydophila pneumoniae).